A 79-amino-acid chain; its full sequence is Acyl carrier protein (79 aa).

The Carrier domain occupies 2–77 (SSIEDRVKKI…QAVDYIKKHL (76 aa)). At S37 the chain carries O-(pantetheine 4'-phosphoryl)serine.

It belongs to the acyl carrier protein (ACP) family. 4'-phosphopantetheine is transferred from CoA to a specific serine of apo-ACP by AcpS. This modification is essential for activity because fatty acids are bound in thioester linkage to the sulfhydryl of the prosthetic group.

It localises to the cytoplasm. It participates in lipid metabolism; fatty acid biosynthesis. Carrier of the growing fatty acid chain in fatty acid biosynthesis. This Halorhodospira halophila (strain DSM 244 / SL1) (Ectothiorhodospira halophila (strain DSM 244 / SL1)) protein is Acyl carrier protein.